The primary structure comprises 164 residues: Transcriptional repressor NrdR (164 aa).

A zinc finger spans residues Cys3–Cys34. The 91-residue stretch at Leu49–Glu139 folds into the ATP-cone domain.

It belongs to the NrdR family. Zn(2+) serves as cofactor.

Functionally, negatively regulates transcription of bacterial ribonucleotide reductase nrd genes and operons by binding to NrdR-boxes. This chain is Transcriptional repressor NrdR, found in Streptococcus uberis (strain ATCC BAA-854 / 0140J).